We begin with the raw amino-acid sequence, 158 residues long: NAD(P)H-quinone oxidoreductase subunit J, chloroplastic (158 aa).

The protein belongs to the complex I 30 kDa subunit family. In terms of assembly, NDH is composed of at least 16 different subunits, 5 of which are encoded in the nucleus.

The protein localises to the plastid. The protein resides in the chloroplast thylakoid membrane. The catalysed reaction is a plastoquinone + NADH + (n+1) H(+)(in) = a plastoquinol + NAD(+) + n H(+)(out). The enzyme catalyses a plastoquinone + NADPH + (n+1) H(+)(in) = a plastoquinol + NADP(+) + n H(+)(out). Functionally, NDH shuttles electrons from NAD(P)H:plastoquinone, via FMN and iron-sulfur (Fe-S) centers, to quinones in the photosynthetic chain and possibly in a chloroplast respiratory chain. The immediate electron acceptor for the enzyme in this species is believed to be plastoquinone. Couples the redox reaction to proton translocation, and thus conserves the redox energy in a proton gradient. This chain is NAD(P)H-quinone oxidoreductase subunit J, chloroplastic, found in Coffea arabica (Arabian coffee).